Here is a 109-residue protein sequence, read N- to C-terminus: N-alpha-acetyltransferase 38, NatC auxiliary subunit (109 aa).

The 79-residue stretch at Leu23–Ser101 folds into the Sm domain.

The protein belongs to the snRNP Sm proteins family. In terms of assembly, component of the N-terminal acetyltransferase C (NatC) complex.

Its subcellular location is the cytoplasm. The protein localises to the nucleus. In terms of biological role, auxillary component of the N-terminal acetyltransferase C (NatC) complex which catalyzes acetylation of N-terminal methionine residues. N-terminal acetylation protects proteins from ubiquitination and degradation by the N-end rule pathway. The chain is N-alpha-acetyltransferase 38, NatC auxiliary subunit (naa38) from Danio rerio (Zebrafish).